Reading from the N-terminus, the 376-residue chain is Cyclin-D3-1 (376 aa).

The disordered stretch occupies residues 298 to 376 (KRKSHDSSSS…HLPWAIVATP (79 aa)). Positions 321 to 349 (NSDESSNDSWSASSCNPPTSSSSPQQQPP) are enriched in low complexity. Basic and acidic residues predominate over residues 354–363 (RGAEENEKKK).

Belongs to the cyclin family. Cyclin D subfamily. Interacts with the C-terminal domain of CDKA-1. Interacts with KRP1/ICK1. Interacts with KRP6. Phosphorylated. In terms of tissue distribution, highly expressed in roots and at lower levels in leaves and flowers. Expressed in vegetative shoot meristem and inflorescence.

Involved in the control of the cell cycle at the G1/S (start) transition. Activates the G1/S phase transition in response to cytokinin hormone signal, but declines in response to sucrose starvation leading to G1 arrest. Involved in the induction of mitotic cell division. Plays an important role in the switch from cell proliferation to the final stages of differentiation during plant development. May not be involved in the activation of cell cycle in the root apical meristem (RAM) in the early phase of seed germination. Promotes divisions in the guard cells (GCs) after the guard mother cells (GMC) symmetric division. This is Cyclin-D3-1 (CYCD3-1) from Arabidopsis thaliana (Mouse-ear cress).